The chain runs to 252 residues: Ribosomal RNA small subunit methyltransferase J (252 aa).

Residues Arg104–Asp105, Glu120–Arg121, and Asp174 each bind S-adenosyl-L-methionine.

Belongs to the methyltransferase superfamily. RsmJ family.

It localises to the cytoplasm. The enzyme catalyses guanosine(1516) in 16S rRNA + S-adenosyl-L-methionine = N(2)-methylguanosine(1516) in 16S rRNA + S-adenosyl-L-homocysteine + H(+). In terms of biological role, specifically methylates the guanosine in position 1516 of 16S rRNA. In Mannheimia succiniciproducens (strain KCTC 0769BP / MBEL55E), this protein is Ribosomal RNA small subunit methyltransferase J.